Reading from the N-terminus, the 153-residue chain is Endoribonuclease YbeY (153 aa).

The Zn(2+) site is built by H116, H120, and H126.

It belongs to the endoribonuclease YbeY family. Zn(2+) serves as cofactor.

The protein resides in the cytoplasm. In terms of biological role, single strand-specific metallo-endoribonuclease involved in late-stage 70S ribosome quality control and in maturation of the 3' terminus of the 16S rRNA. This chain is Endoribonuclease YbeY, found in Leifsonia xyli subsp. xyli (strain CTCB07).